A 499-amino-acid polypeptide reads, in one-letter code: Endoglucanase (499 aa).

A signal peptide spans M1 to A29. Residues H65, W69–Y70, Y96, and H131 each bind substrate. E169 serves as the catalytic Proton donor. Substrate is bound at residue Y231. Catalysis depends on E257, which acts as the Nucleophile. Substrate contacts are provided by residues A263–S264, W291, and K296–E298. Residues R330 to P340 show a composition bias toward basic and acidic residues. The interval R330–G353 is disordered. The 150-residue stretch at Q350–N499 folds into the CBM3 domain.

This sequence belongs to the glycosyl hydrolase 5 (cellulase A) family.

The catalysed reaction is Endohydrolysis of (1-&gt;4)-beta-D-glucosidic linkages in cellulose, lichenin and cereal beta-D-glucans.. This Bacillus subtilis protein is Endoglucanase (bglC).